Reading from the N-terminus, the 463-residue chain is Paraneoplastic antigen Ma3 (463 aa).

The disordered stretch occupies residues 363–410 (VGAVPLPASGNSFDARPSQGYRRRRGRGQHRRGGVARAGSRGSRKRKR). The segment covering 383–396 (YRRRRGRGQHRRGG) has biased composition (basic residues). A CCHC-type zinc finger spans residues 412–429 (TFCYSCGEDGHIRVQCIN). Positions 440–463 (KQAAVESGNGNWAWDKSHPKSKAK) are disordered.

Belongs to the PNMA family. Expressed at high levels in the brain and testis. Expressed at lower levels in the heart, trachea and kidney.

It localises to the nucleus. The protein localises to the nucleolus. In Homo sapiens (Human), this protein is Paraneoplastic antigen Ma3 (PNMA3).